Here is a 415-residue protein sequence, read N- to C-terminus: Imidazolonepropionase (415 aa).

Histidine 76 and histidine 78 together coordinate Fe(3+). Positions 76 and 78 each coordinate Zn(2+). 4-imidazolone-5-propanoate-binding residues include arginine 85, tyrosine 148, and histidine 181. Residue tyrosine 148 participates in N-formimidoyl-L-glutamate binding. Fe(3+) is bound at residue histidine 246. Histidine 246 is a binding site for Zn(2+). Glutamate 249 contributes to the 4-imidazolone-5-propanoate binding site. Aspartate 320 contributes to the Fe(3+) binding site. Aspartate 320 lines the Zn(2+) pocket. 2 residues coordinate N-formimidoyl-L-glutamate: asparagine 322 and glycine 324. Residue threonine 325 coordinates 4-imidazolone-5-propanoate.

Belongs to the metallo-dependent hydrolases superfamily. HutI family. Zn(2+) serves as cofactor. The cofactor is Fe(3+).

The protein resides in the cytoplasm. It catalyses the reaction 4-imidazolone-5-propanoate + H2O = N-formimidoyl-L-glutamate. It functions in the pathway amino-acid degradation; L-histidine degradation into L-glutamate; N-formimidoyl-L-glutamate from L-histidine: step 3/3. Catalyzes the hydrolytic cleavage of the carbon-nitrogen bond in imidazolone-5-propanoate to yield N-formimidoyl-L-glutamate. It is the third step in the universal histidine degradation pathway. The protein is Imidazolonepropionase of Thermoanaerobacter pseudethanolicus (strain ATCC 33223 / 39E) (Clostridium thermohydrosulfuricum).